A 264-amino-acid polypeptide reads, in one-letter code: Thymidylate synthase (264 aa).

Arg-21 is a dUMP binding site. Position 51 (His-51) interacts with (6R)-5,10-methylene-5,6,7,8-tetrahydrofolate. 126 to 127 (RR) contributes to the dUMP binding site. The active-site Nucleophile is Cys-146. Residues 166–169 (RSAD), Asn-177, and 207–209 (HLY) contribute to the dUMP site. Asp-169 lines the (6R)-5,10-methylene-5,6,7,8-tetrahydrofolate pocket. Residue Ala-263 participates in (6R)-5,10-methylene-5,6,7,8-tetrahydrofolate binding.

It belongs to the thymidylate synthase family. Bacterial-type ThyA subfamily. As to quaternary structure, homodimer.

Its subcellular location is the cytoplasm. It carries out the reaction dUMP + (6R)-5,10-methylene-5,6,7,8-tetrahydrofolate = 7,8-dihydrofolate + dTMP. Its pathway is pyrimidine metabolism; dTTP biosynthesis. Functionally, catalyzes the reductive methylation of 2'-deoxyuridine-5'-monophosphate (dUMP) to 2'-deoxythymidine-5'-monophosphate (dTMP) while utilizing 5,10-methylenetetrahydrofolate (mTHF) as the methyl donor and reductant in the reaction, yielding dihydrofolate (DHF) as a by-product. This enzymatic reaction provides an intracellular de novo source of dTMP, an essential precursor for DNA biosynthesis. The polypeptide is Thymidylate synthase (Bartonella quintana (strain Toulouse) (Rochalimaea quintana)).